We begin with the raw amino-acid sequence, 254 residues long: Nickel import ATP-binding protein NikD (254 aa).

The ABC transporter domain maps to 2–241 (PQQIELRNIA…PKHTVTRSLV (240 aa)). 36 to 43 (GGSGSGKS) is an ATP binding site.

Belongs to the ABC transporter superfamily. Nickel importer (TC 3.A.1.5.3) family. As to quaternary structure, the complex is composed of two ATP-binding proteins (NikD and NikE), two transmembrane proteins (NikB and NikC) and a solute-binding protein (NikA).

It is found in the cell inner membrane. The enzyme catalyses Ni(2+)(out) + ATP + H2O = Ni(2+)(in) + ADP + phosphate + H(+). Functionally, part of the ABC transporter complex NikABCDE involved in nickel import. Responsible for energy coupling to the transport system. The chain is Nickel import ATP-binding protein NikD from Escherichia coli (strain K12).